A 121-amino-acid polypeptide reads, in one-letter code: Putative ferredoxin (121 aa).

It to E.coli YkgJ.

This is Putative ferredoxin from Acinetobacter calcoaceticus.